The following is a 139-amino-acid chain: Nucleoside diphosphate kinase (139 aa).

Residues Lys11, Phe59, Arg87, Thr93, Arg104, and Asn114 each coordinate ATP. Residue His117 is the Pros-phosphohistidine intermediate of the active site.

It belongs to the NDK family. Homotetramer. Requires Mg(2+) as cofactor.

The protein localises to the cytoplasm. It carries out the reaction a 2'-deoxyribonucleoside 5'-diphosphate + ATP = a 2'-deoxyribonucleoside 5'-triphosphate + ADP. The catalysed reaction is a ribonucleoside 5'-diphosphate + ATP = a ribonucleoside 5'-triphosphate + ADP. Major role in the synthesis of nucleoside triphosphates other than ATP. The ATP gamma phosphate is transferred to the NDP beta phosphate via a ping-pong mechanism, using a phosphorylated active-site intermediate. This Moorella thermoacetica (strain ATCC 39073 / JCM 9320) protein is Nucleoside diphosphate kinase.